The sequence spans 187 residues: dCTP deaminase, dUMP-forming (187 aa).

DCTP contacts are provided by residues 99–104 (KSSIAR), Asp117, 125–127 (TLE), Gln146, Tyr159, Lys166, and Gln170. Glu127 (proton donor/acceptor) is an active-site residue.

This sequence belongs to the dCTP deaminase family. As to quaternary structure, homotrimer.

The enzyme catalyses dCTP + 2 H2O = dUMP + NH4(+) + diphosphate. It functions in the pathway pyrimidine metabolism; dUMP biosynthesis; dUMP from dCTP: step 1/1. Bifunctional enzyme that catalyzes both the deamination of dCTP to dUTP and the hydrolysis of dUTP to dUMP without releasing the toxic dUTP intermediate. In Methanoculleus marisnigri (strain ATCC 35101 / DSM 1498 / JR1), this protein is dCTP deaminase, dUMP-forming.